We begin with the raw amino-acid sequence, 78 residues long: Putative membrane protein insertion efficiency factor (78 aa).

It belongs to the UPF0161 family.

It localises to the cell membrane. Functionally, could be involved in insertion of integral membrane proteins into the membrane. This Bacillus thuringiensis subsp. konkukian (strain 97-27) protein is Putative membrane protein insertion efficiency factor.